The primary structure comprises 732 residues: Catalase-peroxidase (732 aa).

Residues 97–220 constitute a cross-link (tryptophyl-tyrosyl-methioninium (Trp-Tyr) (with M-246)); it reads WHSAGTYRTG…LAAVQMGLIY (124 aa). Catalysis depends on histidine 98, which acts as the Proton acceptor. Residues 220–246 constitute a cross-link (tryptophyl-tyrosyl-methioninium (Tyr-Met) (with W-97)); sequence YVNPEGPDGKPDPVAAGKDIRETFGRM. Histidine 261 is a heme b binding site.

The protein belongs to the peroxidase family. Peroxidase/catalase subfamily. In terms of assembly, homodimer or homotetramer. It depends on heme b as a cofactor. Formation of the three residue Trp-Tyr-Met cross-link is important for the catalase, but not the peroxidase activity of the enzyme.

It carries out the reaction H2O2 + AH2 = A + 2 H2O. The enzyme catalyses 2 H2O2 = O2 + 2 H2O. In terms of biological role, bifunctional enzyme with both catalase and broad-spectrum peroxidase activity. The protein is Catalase-peroxidase of Chlorobium phaeobacteroides (strain BS1).